The chain runs to 129 residues: Iron-sulfur cluster assembly 1 homolog, mitochondrial (129 aa).

A mitochondrion-targeting transit peptide spans 1–12 (MSASIARATVRA). C57, C121, and C123 together coordinate Fe cation.

It belongs to the HesB/IscA family.

Its subcellular location is the mitochondrion. Its function is as follows. Involved in the maturation of mitochondrial 4Fe-4S proteins functioning late in the iron-sulfur cluster assembly pathway. Probably involved in the binding of an intermediate of Fe/S cluster assembly. This Danio rerio (Zebrafish) protein is Iron-sulfur cluster assembly 1 homolog, mitochondrial (isca1).